A 537-amino-acid polypeptide reads, in one-letter code: Tyrosine-protein kinase Fyn (537 aa).

G2 carries the N-myristoyl glycine lipid modification. Residues C3 and C6 are each lipidated (S-palmitoyl cysteine). T12 carries the post-translational modification Phosphothreonine; by PKC. The disordered stretch occupies residues 14–35 (LTEERDGSLNQSSGYRYGTDPT). Phosphoserine is present on residues S21 and S26. Residues 82–143 (TGVTLFVALY…PSNYVAPVDS (62 aa)) enclose the SH3 domain. The SH2 domain maps to 149 to 246 (WYFGKLGRKD…GLCCRLVVPC (98 aa)). Position 185 is a phosphotyrosine (Y185). Residues 271 to 524 (LQLIKRLGNG…YLQGFLEDYF (254 aa)) form the Protein kinase domain. ATP is bound by residues 277–285 (LGNGQFGEV) and K299. Catalysis depends on D390, which acts as the Proton acceptor. The residue at position 420 (Y420) is a Phosphotyrosine; by autocatalysis. At Y531 the chain carries Phosphotyrosine; by CSK.

The protein belongs to the protein kinase superfamily. Tyr protein kinase family. SRC subfamily. As to quaternary structure, interacts (via its SH3 domain) with PIK3R1 and PRMT8. Interacts with FYB1, PAG1, and SH2D1A. Interacts with CD79A (tyrosine-phosphorylated form); the interaction increases FYN activity. Interacts (via SH2 domain) with CSF1R (tyrosine phosphorylated). Interacts with TOM1L1 (phosphorylated form). Interacts with KDR (tyrosine phosphorylated). Interacts (via SH3 domain) with KLHL2 (via N-terminus). Interacts with SH2D1A and SLAMF1. Interacts with ITCH; the interaction phosphorylates ITCH and negatively regulates its activity. Interacts with FASLG. Interacts with RUNX3. Interacts with KIT. Interacts with EPHA8; possible downstream effector of EPHA8 in regulation of cell adhesion. Interacts with PTK2/FAK1; this interaction leads to PTK2/FAK1 phosphorylation and activation. Interacts with CAV1; this interaction couples integrins to the Ras-ERK pathway. Interacts with UNC119. Interacts (via SH2 domain) with PTPRH (phosphorylated form). Interacts with PTPRO (phosphorylated form). Interacts with PTPRB (phosphorylated form). Interacts with FYB2. Interacts with DSCAM. Interacts with SKAP1 and FYB1; this interaction promotes the phosphorylation of CLNK. Interacts with NEDD9; in the presence of PTK2. Requires Mn(2+) as cofactor. Post-translationally, autophosphorylated at Tyr-420. Phosphorylation on the C-terminal tail at Tyr-531 by CSK maintains the enzyme in an inactive state. PTPRC/CD45 dephosphorylates Tyr-531 leading to activation. Ultraviolet B (UVB) strongly increase phosphorylation at Thr-12 and kinase activity, and promotes translocation from the cytoplasm to the nucleus. Dephosphorylation at Tyr-420 by PTPN2 negatively regulates T-cell receptor signaling. Phosphorylated at tyrosine residues, which can be enhanced by NTN1. Palmitoylated. Palmitoylation at Cys-3 and Cys-6, probably by ZDHHC21, regulates subcellular location.

Its subcellular location is the cytoplasm. The protein resides in the nucleus. It is found in the cell membrane. The protein localises to the perikaryon. It catalyses the reaction L-tyrosyl-[protein] + ATP = O-phospho-L-tyrosyl-[protein] + ADP + H(+). With respect to regulation, inhibited by phosphorylation of Tyr-531 by leukocyte common antigen and activated by dephosphorylation of this site. Non-receptor tyrosine-protein kinase that plays a role in many biological processes including regulation of cell growth and survival, cell adhesion, integrin-mediated signaling, cytoskeletal remodeling, cell motility, immune response and axon guidance. Inactive FYN is phosphorylated on its C-terminal tail within the catalytic domain. Following activation by PKA, the protein subsequently associates with PTK2/FAK1, allowing PTK2/FAK1 phosphorylation, activation and targeting to focal adhesions. Involved in the regulation of cell adhesion and motility through phosphorylation of CTNNB1 (beta-catenin) and CTNND1 (delta-catenin). Regulates cytoskeletal remodeling by phosphorylating several proteins including the actin regulator WAS and the microtubule-associated proteins MAP2 and MAPT. Promotes cell survival by phosphorylating AGAP2/PIKE-A and preventing its apoptotic cleavage. Participates in signal transduction pathways that regulate the integrity of the glomerular slit diaphragm (an essential part of the glomerular filter of the kidney) by phosphorylating several slit diaphragm components including NPHS1, KIRREL1 and TRPC6. Plays a role in neural processes by phosphorylating DPYSL2, a multifunctional adapter protein within the central nervous system, ARHGAP32, a regulator for Rho family GTPases implicated in various neural functions, and SNCA, a small pre-synaptic protein. Involved in reelin signaling by mediating phosphorylation of DAB1 following reelin (RELN)-binding to its receptor. Participates in the downstream signaling pathways that lead to T-cell differentiation and proliferation following T-cell receptor (TCR) stimulation. Phosphorylates PTK2B/PYK2 in response to T-cell receptor activation. Also participates in negative feedback regulation of TCR signaling through phosphorylation of PAG1, thereby promoting interaction between PAG1 and CSK and recruitment of CSK to lipid rafts. CSK maintains LCK and FYN in an inactive form. Promotes CD28-induced phosphorylation of VAV1. In mast cells, phosphorylates CLNK after activation of immunoglobulin epsilon receptor signaling. Can also promote CD244-mediated NK cell activation. This chain is Tyrosine-protein kinase Fyn, found in Bos taurus (Bovine).